A 66-amino-acid chain; its full sequence is Large ribosomal subunit protein bL32 (66 aa).

The protein belongs to the bacterial ribosomal protein bL32 family.

The chain is Large ribosomal subunit protein bL32 from Rickettsia akari (strain Hartford).